We begin with the raw amino-acid sequence, 402 residues long: Diaminopimelate decarboxylase (402 aa).

Lys-61 is modified (N6-(pyridoxal phosphate)lysine). Residues Gly-233 and 269 to 272 (EPGR) contribute to the pyridoxal 5'-phosphate site. Residues Arg-272, Arg-304, Tyr-308, Glu-334, and Tyr-360 each coordinate substrate. Tyr-360 contributes to the pyridoxal 5'-phosphate binding site.

This sequence belongs to the Orn/Lys/Arg decarboxylase class-II family. LysA subfamily. As to quaternary structure, homodimer. Requires pyridoxal 5'-phosphate as cofactor.

The catalysed reaction is meso-2,6-diaminopimelate + H(+) = L-lysine + CO2. The protein operates within amino-acid biosynthesis; L-lysine biosynthesis via DAP pathway; L-lysine from DL-2,6-diaminopimelate: step 1/1. Specifically catalyzes the decarboxylation of meso-diaminopimelate (meso-DAP) to L-lysine. This chain is Diaminopimelate decarboxylase, found in Thermoplasma acidophilum (strain ATCC 25905 / DSM 1728 / JCM 9062 / NBRC 15155 / AMRC-C165).